Here is a 278-residue protein sequence, read N- to C-terminus: uncharacterized protein (278 aa).

The segment covering methionine 1–serine 16 has biased composition (basic and acidic residues). 2 disordered regions span residues methionine 1–asparagine 86 and phenylalanine 98–leucine 126. Composition is skewed to low complexity over residues glutamine 33–serine 45 and glycine 99–serine 117.

Belongs to the adhesin P1 family.

This is an uncharacterized protein from Mycoplasma pneumoniae (strain ATCC 29342 / M129 / Subtype 1) (Mycoplasmoides pneumoniae).